Consider the following 28-residue polypeptide: Small spore coat assembly protein A (28 aa).

Residues 8–28 (GFALLVVLFILLIIVGAAYIY) form a helical membrane-spanning segment.

Belongs to the SscA family.

The protein resides in the spore coat. It localises to the membrane. Functionally, spore protein involved in the assembly of several components of the spore coat, including CotB, CotG and CotH, and in spore germination. This Bacillus subtilis (strain 168) protein is Small spore coat assembly protein A.